Here is a 344-residue protein sequence, read N- to C-terminus: Putative F-box/kelch-repeat protein At1g19930 (344 aa).

One can recognise an F-box domain in the interval 8-54 (TELIFSLPNDLLVNILARVSRLDYPILSLVSKRFSSVLTLPELYQTR). Kelch repeat units follow at residues 122–168 (NIYN…LLDG), 170–195 (IYVT…VDGK), 196–241 (LHSC…YYYY), and 243–276 (NENI…NVRL).

The protein is Putative F-box/kelch-repeat protein At1g19930 of Arabidopsis thaliana (Mouse-ear cress).